Reading from the N-terminus, the 276-residue chain is Tyrosinase (276 aa).

The Cu cation site is built by His38, His56, His66, His193, His197, and His219.

The protein belongs to the tyrosinase family. Cu(2+) serves as cofactor.

The catalysed reaction is 2 L-dopa + O2 = 2 L-dopaquinone + 2 H2O. It carries out the reaction L-tyrosine + O2 = L-dopaquinone + H2O. This is a copper-containing oxidase that functions in the formation of pigments such as melanins and other polyphenolic compounds. This Streptomyces galbus protein is Tyrosinase (melC2).